Here is a 307-residue protein sequence, read N- to C-terminus: Pantothenate kinase (307 aa).

90–97 (GSVAVGKS) provides a ligand contact to ATP.

The protein belongs to the prokaryotic pantothenate kinase family.

The protein resides in the cytoplasm. The enzyme catalyses (R)-pantothenate + ATP = (R)-4'-phosphopantothenate + ADP + H(+). It functions in the pathway cofactor biosynthesis; coenzyme A biosynthesis; CoA from (R)-pantothenate: step 1/5. This Limosilactobacillus fermentum (strain NBRC 3956 / LMG 18251) (Lactobacillus fermentum) protein is Pantothenate kinase.